The sequence spans 97 residues: Aspartyl/glutamyl-tRNA(Asn/Gln) amidotransferase subunit C (97 aa).

The interval 58 to 78 (LPQGRLRKDTPRDPLDRENAL) is disordered. Residues 63–77 (LRKDTPRDPLDRENA) show a composition bias toward basic and acidic residues.

This sequence belongs to the GatC family. In terms of assembly, heterotrimer of A, B and C subunits.

The catalysed reaction is L-glutamyl-tRNA(Gln) + L-glutamine + ATP + H2O = L-glutaminyl-tRNA(Gln) + L-glutamate + ADP + phosphate + H(+). It catalyses the reaction L-aspartyl-tRNA(Asn) + L-glutamine + ATP + H2O = L-asparaginyl-tRNA(Asn) + L-glutamate + ADP + phosphate + 2 H(+). Its function is as follows. Allows the formation of correctly charged Asn-tRNA(Asn) or Gln-tRNA(Gln) through the transamidation of misacylated Asp-tRNA(Asn) or Glu-tRNA(Gln) in organisms which lack either or both of asparaginyl-tRNA or glutaminyl-tRNA synthetases. The reaction takes place in the presence of glutamine and ATP through an activated phospho-Asp-tRNA(Asn) or phospho-Glu-tRNA(Gln). The protein is Aspartyl/glutamyl-tRNA(Asn/Gln) amidotransferase subunit C of Saccharolobus islandicus (strain Y.N.15.51 / Yellowstone #2) (Sulfolobus islandicus).